The primary structure comprises 375 residues: tRNA-specific 2-thiouridylase MnmA (375 aa).

ATP-binding positions include 12–19 and Met-38; that span reads GMSGGVDS. Positions 98-100 are interaction with target base in tRNA; that stretch reads NPD. Cys-103 (nucleophile) is an active-site residue. A disulfide bridge links Cys-103 with Cys-200. Position 127 (Gly-127) interacts with ATP. The segment at 150–152 is interaction with tRNA; the sequence is KDQ. Catalysis depends on Cys-200, which acts as the Cysteine persulfide intermediate. Positions 312–313 are interaction with tRNA; that stretch reads RY.

It belongs to the MnmA/TRMU family.

The protein localises to the cytoplasm. It carries out the reaction S-sulfanyl-L-cysteinyl-[protein] + uridine(34) in tRNA + AH2 + ATP = 2-thiouridine(34) in tRNA + L-cysteinyl-[protein] + A + AMP + diphosphate + H(+). Functionally, catalyzes the 2-thiolation of uridine at the wobble position (U34) of tRNA, leading to the formation of s(2)U34. The chain is tRNA-specific 2-thiouridylase MnmA from Lactobacillus gasseri (strain ATCC 33323 / DSM 20243 / BCRC 14619 / CIP 102991 / JCM 1131 / KCTC 3163 / NCIMB 11718 / NCTC 13722 / AM63).